Reading from the N-terminus, the 880-residue chain is Translation initiation factor IF-2 (880 aa).

A compositionally biased stretch (basic and acidic residues) spans 143–228 (EAEAKAKAKA…EAERNGDHHI (86 aa)). The segment at 143–289 (EAEAKAKAKA…APESMAHGFN (147 aa)) is disordered. The segment covering 249–262 (GRRARNKSNAKKRG) has biased composition (basic residues). One can recognise a tr-type G domain in the interval 380-549 (SRAPVVTIMG…LLQAEVLELK (170 aa)). The segment at 389 to 396 (GHVDHGKT) is G1. 389 to 396 (GHVDHGKT) lines the GTP pocket. A G2 region spans residues 414–418 (GITQH). The tract at residues 435–438 (DTPG) is G3. GTP contacts are provided by residues 435 to 439 (DTPGH) and 489 to 492 (NKMD). Residues 489–492 (NKMD) are G4. The G5 stretch occupies residues 525-527 (SAK).

Belongs to the TRAFAC class translation factor GTPase superfamily. Classic translation factor GTPase family. IF-2 subfamily.

It localises to the cytoplasm. One of the essential components for the initiation of protein synthesis. Protects formylmethionyl-tRNA from spontaneous hydrolysis and promotes its binding to the 30S ribosomal subunits. Also involved in the hydrolysis of GTP during the formation of the 70S ribosomal complex. This Shewanella putrefaciens (strain CN-32 / ATCC BAA-453) protein is Translation initiation factor IF-2.